A 58-amino-acid polypeptide reads, in one-letter code: Single-pass membrane and coiled-coil domain-containing protein 4 homolog (58 aa).

The stretch at 1 to 31 forms a coiled coil; it reads MRQLKGKVKETRKQKKERKLDNLETQAKIRT. The helical transmembrane segment at 31–51 threads the bilayer; that stretch reads TVVLPALGVLAVFLVLFVYLK.

This sequence belongs to the SMCO4 family.

It localises to the membrane. This is Single-pass membrane and coiled-coil domain-containing protein 4 homolog from Drosophila melanogaster (Fruit fly).